Reading from the N-terminus, the 156-residue chain is Small ribosomal subunit protein uS7 (156 aa).

Belongs to the universal ribosomal protein uS7 family. Part of the 30S ribosomal subunit. Contacts proteins S9 and S11.

Its function is as follows. One of the primary rRNA binding proteins, it binds directly to 16S rRNA where it nucleates assembly of the head domain of the 30S subunit. Is located at the subunit interface close to the decoding center, probably blocks exit of the E-site tRNA. The polypeptide is Small ribosomal subunit protein uS7 (Buchnera aphidicola subsp. Acyrthosiphon pisum (strain Tuc7)).